Here is a 312-residue protein sequence, read N- to C-terminus: Ribosomal RNA small subunit methyltransferase H (312 aa).

S-adenosyl-L-methionine is bound by residues 35 to 37 (GGH), D55, F79, D101, and Q108.

Belongs to the methyltransferase superfamily. RsmH family.

It is found in the cytoplasm. It carries out the reaction cytidine(1402) in 16S rRNA + S-adenosyl-L-methionine = N(4)-methylcytidine(1402) in 16S rRNA + S-adenosyl-L-homocysteine + H(+). Specifically methylates the N4 position of cytidine in position 1402 (C1402) of 16S rRNA. This is Ribosomal RNA small subunit methyltransferase H from Buchnera aphidicola subsp. Schizaphis graminum (strain Sg).